The chain runs to 123 residues: uncharacterized protein (123 aa).

Transmembrane regions (helical) follow at residues 55-77 (LLIH…STIL) and 92-114 (FFIN…TIVY).

The protein resides in the cell membrane. This is an uncharacterized protein from Pasteurella multocida (strain Pm70).